The sequence spans 275 residues: Phosphonoacetaldehyde hydrolase (275 aa).

Residue aspartate 15 is the Nucleophile of the active site. Positions 15 and 17 each coordinate Mg(2+). Lysine 56 (schiff-base intermediate with substrate) is an active-site residue. Residue aspartate 189 coordinates Mg(2+).

The protein belongs to the HAD-like hydrolase superfamily. PhnX family. As to quaternary structure, homodimer. The cofactor is Mg(2+).

It catalyses the reaction phosphonoacetaldehyde + H2O = acetaldehyde + phosphate + H(+). Its function is as follows. Involved in phosphonate degradation. This chain is Phosphonoacetaldehyde hydrolase, found in Pseudomonas fluorescens (strain SBW25).